Reading from the N-terminus, the 229-residue chain is Cytidylate kinase (229 aa).

12–20 (GPSGSGKGT) contacts ATP.

The protein belongs to the cytidylate kinase family. Type 1 subfamily.

It is found in the cytoplasm. The catalysed reaction is CMP + ATP = CDP + ADP. It carries out the reaction dCMP + ATP = dCDP + ADP. The protein is Cytidylate kinase of Stutzerimonas stutzeri (strain A1501) (Pseudomonas stutzeri).